A 233-amino-acid polypeptide reads, in one-letter code: Aspartate/glutamate leucyltransferase (233 aa).

The protein belongs to the R-transferase family. Bpt subfamily.

Its subcellular location is the cytoplasm. It carries out the reaction N-terminal L-glutamyl-[protein] + L-leucyl-tRNA(Leu) = N-terminal L-leucyl-L-glutamyl-[protein] + tRNA(Leu) + H(+). It catalyses the reaction N-terminal L-aspartyl-[protein] + L-leucyl-tRNA(Leu) = N-terminal L-leucyl-L-aspartyl-[protein] + tRNA(Leu) + H(+). In terms of biological role, functions in the N-end rule pathway of protein degradation where it conjugates Leu from its aminoacyl-tRNA to the N-termini of proteins containing an N-terminal aspartate or glutamate. The chain is Aspartate/glutamate leucyltransferase from Vibrio campbellii (strain ATCC BAA-1116).